Consider the following 134-residue polypeptide: Prefoldin subunit alpha (134 aa).

The protein belongs to the prefoldin subunit alpha family. Heterohexamer of two alpha and four beta subunits.

The protein resides in the cytoplasm. Molecular chaperone capable of stabilizing a range of proteins. Seems to fulfill an ATP-independent, HSP70-like function in archaeal de novo protein folding. In Pyrobaculum calidifontis (strain DSM 21063 / JCM 11548 / VA1), this protein is Prefoldin subunit alpha.